The following is a 687-amino-acid chain: Elongation factor G (687 aa).

In terms of domain architecture, tr-type G spans Asn8–Leu282. GTP-binding positions include Ala17 to Thr24, Asp81 to His85, and Asn135 to Asp138.

It belongs to the TRAFAC class translation factor GTPase superfamily. Classic translation factor GTPase family. EF-G/EF-2 subfamily.

The protein resides in the cytoplasm. Functionally, catalyzes the GTP-dependent ribosomal translocation step during translation elongation. During this step, the ribosome changes from the pre-translocational (PRE) to the post-translocational (POST) state as the newly formed A-site-bound peptidyl-tRNA and P-site-bound deacylated tRNA move to the P and E sites, respectively. Catalyzes the coordinated movement of the two tRNA molecules, the mRNA and conformational changes in the ribosome. The chain is Elongation factor G from Clostridium novyi (strain NT).